The chain runs to 154 residues: Myoglobin (154 aa).

Positions 2–148 (GLSDGEWQLV…FRNDIAAKYK (147 aa)) constitute a Globin domain. S4 bears the Phosphoserine mark. Residue H65 participates in nitrite binding. Residue H65 coordinates O2. A phosphothreonine mark is found at T68 and T75. H94 is a heme b binding site. S121 is subject to Phosphoserine.

The protein belongs to the globin family. As to quaternary structure, monomeric.

Its subcellular location is the cytoplasm. The protein resides in the sarcoplasm. The enzyme catalyses Fe(III)-heme b-[protein] + nitric oxide + H2O = Fe(II)-heme b-[protein] + nitrite + 2 H(+). The catalysed reaction is H2O2 + AH2 = A + 2 H2O. In terms of biological role, monomeric heme protein which primary function is to store oxygen and facilitate its diffusion within muscle tissues. Reversibly binds oxygen through a pentacoordinated heme iron and enables its timely and efficient release as needed during periods of heightened demand. Depending on the oxidative conditions of tissues and cells, and in addition to its ability to bind oxygen, it also has a nitrite reductase activity whereby it regulates the production of bioactive nitric oxide. Under stress conditions, like hypoxia and anoxia, it also protects cells against reactive oxygen species thanks to its pseudoperoxidase activity. The polypeptide is Myoglobin (Mus musculus (Mouse)).